The primary structure comprises 123 residues: Large ribosomal subunit protein uL14 (123 aa).

This sequence belongs to the universal ribosomal protein uL14 family. In terms of assembly, part of the 50S ribosomal subunit. Forms a cluster with proteins L3 and L19. In the 70S ribosome, L14 and L19 interact and together make contacts with the 16S rRNA in bridges B5 and B8.

Functionally, binds to 23S rRNA. Forms part of two intersubunit bridges in the 70S ribosome. The sequence is that of Large ribosomal subunit protein uL14 from Escherichia coli O6:K15:H31 (strain 536 / UPEC).